The chain runs to 260 residues: Glutamate racemase (260 aa).

Substrate-binding positions include 7–8 (DS) and 39–40 (YG). Cys-71 (proton donor/acceptor) is an active-site residue. 72 to 73 (NT) serves as a coordination point for substrate. Residue Cys-182 is the Proton donor/acceptor of the active site. 183-184 (TH) is a substrate binding site.

Belongs to the aspartate/glutamate racemases family.

It catalyses the reaction L-glutamate = D-glutamate. Its pathway is cell wall biogenesis; peptidoglycan biosynthesis. Provides the (R)-glutamate required for cell wall biosynthesis. The chain is Glutamate racemase from Sulfurihydrogenibium sp. (strain YO3AOP1).